The following is a 376-amino-acid chain: MSYMMAKTLEEQSLRECEHYIQTHGIQRVLKDCIVQLCVCRPENPVQFLRQYFQKLEREQVKLDASRQVISPDDCEDLSPMPQTAAPPVRRRGGISAEPVTEEDATNYVKKVVPKDYKTMNALSKAIAKNVLFAHLDESERSDIFDAMFPVNHIAGENIIQQGDEGDNFYVIDVGEVDVFVNSELVTTISEGGSFGELALIYGTPRAATVRAKTDVKLWGIDRDSYRRILMGSTIRKRKMYEEFLSRVSILESLDKWERLTVADSLETCSFDDGETIVKQGAAGDDFYIILEGCAVVLQQRSEGEDPAEVGRLGSSDYFGEIALLLDRPRAATVVARGPLKCVKLDRARFERVLGPCADILKRNITQYNSFVSLSV.

Residues 1–131 (MSYMMAKTLE…ALSKAIAKNV (131 aa)) are dimerization and phosphorylation. The interval 72-93 (PDDCEDLSPMPQTAAPPVRRRG) is disordered. Residues 91 to 95 (RRGGI) carry the Pseudophosphorylation motif motif. Ser96 carries the post-translational modification Phosphoserine. Residues 132 to 247 (LFAH…FLSR), Glu197, Arg206, 250 to 371 (ILES…YNSF), Glu321, and Arg330 contribute to the 3',5'-cyclic AMP site.

Belongs to the cAMP-dependent kinase regulatory chain family. In terms of assembly, tetramer, composed of 2 regulatory (R) and 2 catalytic (C) subunits. In the presence of cAMP it dissociates into 2 active monomeric C subunits and an R dimer. Post-translationally, the pseudophosphorylation site binds to the substrate-binding region of the catalytic chain but is not phosphorylated. The physiological significance of phosphorylations by other kinases is unclear.

The polypeptide is cAMP-dependent protein kinase type I regulatory subunit (Pka-R1) (Drosophila melanogaster (Fruit fly)).